A 131-amino-acid chain; its full sequence is Thioredoxin H4-1 (131 aa).

The 127-residue stretch at 3–129 folds into the Thioredoxin domain; the sequence is SCVGKERSDE…LEKKVAALAD (127 aa). Catalysis depends on nucleophile residues Cys55 and Cys58. Cys55 and Cys58 form a disulfide bridge.

This sequence belongs to the thioredoxin family. Plant H-type subfamily.

It localises to the cytoplasm. Functionally, probable thiol-disulfide oxidoreductase that may be involved in the redox regulation of a number of cytosolic enzymes. In Oryza sativa subsp. japonica (Rice), this protein is Thioredoxin H4-1.